A 373-amino-acid polypeptide reads, in one-letter code: Probable dual-specificity RNA methyltransferase RlmN (373 aa).

Residue Glu111 is the Proton acceptor of the active site. The Radical SAM core domain maps to 117 to 356 (GPGRLTACLS…LRKSYGTSIH (240 aa)). The cysteines at positions 124 and 359 are disulfide-linked. 3 residues coordinate [4Fe-4S] cluster: Cys131, Cys135, and Cys138. S-adenosyl-L-methionine contacts are provided by residues 183-184 (GE), Ser216, 239-241 (SLH), and Asn316. The S-methylcysteine intermediate role is filled by Cys359.

This sequence belongs to the radical SAM superfamily. RlmN family. [4Fe-4S] cluster is required as a cofactor.

The protein localises to the cytoplasm. The enzyme catalyses adenosine(2503) in 23S rRNA + 2 reduced [2Fe-2S]-[ferredoxin] + 2 S-adenosyl-L-methionine = 2-methyladenosine(2503) in 23S rRNA + 5'-deoxyadenosine + L-methionine + 2 oxidized [2Fe-2S]-[ferredoxin] + S-adenosyl-L-homocysteine. It catalyses the reaction adenosine(37) in tRNA + 2 reduced [2Fe-2S]-[ferredoxin] + 2 S-adenosyl-L-methionine = 2-methyladenosine(37) in tRNA + 5'-deoxyadenosine + L-methionine + 2 oxidized [2Fe-2S]-[ferredoxin] + S-adenosyl-L-homocysteine. In terms of biological role, specifically methylates position 2 of adenine 2503 in 23S rRNA and position 2 of adenine 37 in tRNAs. The chain is Probable dual-specificity RNA methyltransferase RlmN from Chlorobium phaeovibrioides (strain DSM 265 / 1930) (Prosthecochloris vibrioformis (strain DSM 265)).